Reading from the N-terminus, the 209-residue chain is Outer-membrane lipoprotein carrier protein (209 aa).

The N-terminal stretch at 1 to 22 (MKKLLLTLAMVPAVLFSPTAWG) is a signal peptide.

Belongs to the LolA family. Monomer.

It is found in the periplasm. In terms of biological role, participates in the translocation of lipoproteins from the inner membrane to the outer membrane. Only forms a complex with a lipoprotein if the residue after the N-terminal Cys is not an aspartate (The Asp acts as a targeting signal to indicate that the lipoprotein should stay in the inner membrane). The protein is Outer-membrane lipoprotein carrier protein of Alcanivorax borkumensis (strain ATCC 700651 / DSM 11573 / NCIMB 13689 / SK2).